Consider the following 344-residue polypeptide: UDP-3-O-acylglucosamine N-acyltransferase (344 aa).

Histidine 248 serves as the catalytic Proton acceptor.

This sequence belongs to the transferase hexapeptide repeat family. LpxD subfamily. In terms of assembly, homotrimer.

The enzyme catalyses a UDP-3-O-[(3R)-3-hydroxyacyl]-alpha-D-glucosamine + a (3R)-hydroxyacyl-[ACP] = a UDP-2-N,3-O-bis[(3R)-3-hydroxyacyl]-alpha-D-glucosamine + holo-[ACP] + H(+). It functions in the pathway bacterial outer membrane biogenesis; LPS lipid A biosynthesis. Catalyzes the N-acylation of UDP-3-O-acylglucosamine using 3-hydroxyacyl-ACP as the acyl donor. Is involved in the biosynthesis of lipid A, a phosphorylated glycolipid that anchors the lipopolysaccharide to the outer membrane of the cell. The chain is UDP-3-O-acylglucosamine N-acyltransferase from Prochlorococcus marinus subsp. pastoris (strain CCMP1986 / NIES-2087 / MED4).